Reading from the N-terminus, the 625-residue chain is Phosphomethylpyrimidine synthase (625 aa).

Substrate is bound by residues N230, M259, Y288, H324, 344–346 (SRG), 385–388 (DGLR), and E424. Position 428 (H428) interacts with Zn(2+). Y451 provides a ligand contact to substrate. Residue H492 coordinates Zn(2+). Residues C572, C575, and C580 each coordinate [4Fe-4S] cluster.

The protein belongs to the ThiC family. As to quaternary structure, homodimer. [4Fe-4S] cluster is required as a cofactor.

It catalyses the reaction 5-amino-1-(5-phospho-beta-D-ribosyl)imidazole + S-adenosyl-L-methionine = 4-amino-2-methyl-5-(phosphooxymethyl)pyrimidine + CO + 5'-deoxyadenosine + formate + L-methionine + 3 H(+). It functions in the pathway cofactor biosynthesis; thiamine diphosphate biosynthesis. In terms of biological role, catalyzes the synthesis of the hydroxymethylpyrimidine phosphate (HMP-P) moiety of thiamine from aminoimidazole ribotide (AIR) in a radical S-adenosyl-L-methionine (SAM)-dependent reaction. The chain is Phosphomethylpyrimidine synthase from Xanthomonas campestris pv. campestris (strain 8004).